The sequence spans 181 residues: Inner membrane-spanning protein YciB (181 aa).

5 helical membrane passes run 10-30 (LIIFFAVYKFFDIYVASGALI), 50-70 (MHLITFVMVTVFGSLTLILHD), 72-92 (SFIKWKVTIVYALFAIALGVS), 118-138 (VTWYWVSFFVVCGLVNIYVAF), and 148-168 (FKVFGLTALTLINTVLTVLYL).

Belongs to the YciB family.

Its subcellular location is the cell inner membrane. Plays a role in cell envelope biogenesis, maintenance of cell envelope integrity and membrane homeostasis. This Shewanella halifaxensis (strain HAW-EB4) protein is Inner membrane-spanning protein YciB.